Reading from the N-terminus, the 393-residue chain is Dual-specificity RNA methyltransferase RlmN (393 aa).

Glutamate 114 functions as the Proton acceptor in the catalytic mechanism. Positions 120–359 constitute a Radical SAM core domain; the sequence is EDDRATLCVS…VIVRKTRGDD (240 aa). An intrachain disulfide couples cysteine 127 to cysteine 364. [4Fe-4S] cluster-binding residues include cysteine 134, cysteine 138, and cysteine 141. Residues 188–189, serine 220, 242–244, and asparagine 321 contribute to the S-adenosyl-L-methionine site; these read GE and SLH. Cysteine 364 serves as the catalytic S-methylcysteine intermediate.

It belongs to the radical SAM superfamily. RlmN family. It depends on [4Fe-4S] cluster as a cofactor.

The protein resides in the cytoplasm. It catalyses the reaction adenosine(2503) in 23S rRNA + 2 reduced [2Fe-2S]-[ferredoxin] + 2 S-adenosyl-L-methionine = 2-methyladenosine(2503) in 23S rRNA + 5'-deoxyadenosine + L-methionine + 2 oxidized [2Fe-2S]-[ferredoxin] + S-adenosyl-L-homocysteine. The enzyme catalyses adenosine(37) in tRNA + 2 reduced [2Fe-2S]-[ferredoxin] + 2 S-adenosyl-L-methionine = 2-methyladenosine(37) in tRNA + 5'-deoxyadenosine + L-methionine + 2 oxidized [2Fe-2S]-[ferredoxin] + S-adenosyl-L-homocysteine. Its function is as follows. Specifically methylates position 2 of adenine 2503 in 23S rRNA and position 2 of adenine 37 in tRNAs. m2A2503 modification seems to play a crucial role in the proofreading step occurring at the peptidyl transferase center and thus would serve to optimize ribosomal fidelity. This chain is Dual-specificity RNA methyltransferase RlmN, found in Actinobacillus pleuropneumoniae serotype 5b (strain L20).